A 215-amino-acid polypeptide reads, in one-letter code: Transcription elongation factor A protein-like 4 (215 aa).

Residue Met-1 is modified to N-acetylmethionine. Positions 1–133 are disordered; sequence MEKLYSENEG…RKAKRKTNKG (133 aa). 3 positions are modified to phosphoserine: Ser-6, Ser-88, and Ser-102. The segment covering 25-102 has biased composition (basic and acidic residues); the sequence is QDERKPEVTC…KPEIEGKPES (78 aa).

The protein belongs to the TFS-II family. TFA subfamily.

The protein resides in the nucleus. Functionally, may be involved in transcriptional regulation. This is Transcription elongation factor A protein-like 4 (TCEAL4) from Homo sapiens (Human).